A 422-amino-acid chain; its full sequence is MSDLLTGIKNYQQMFWQNPNKLSADEALARINFSFDDIFEAQKRLQRFAPLIKKLFPETENGIIESPLAEIPRMKQEIEKLYGGKIHGRLFLKCDNYLKVAGSIKARGGIYEVLKHAETLLLENGLITLEDDYSKIAEERFKKFFSNYKVAVGSTGNLGLSIGIMAAALGFKVDVHMSHDAKEWKKKILRDRGVNVIEYREDYSKAVEEGRKKAAAEKNTYFIDDENSRDLFLGYSVAALRLKDQLTELGIEVNKENPLFVYLPCGVGGAPGGISFGLKTIFKDDVYCYFVEPTHSPCMLLGLVTQKFSAIHVRDFGLDNITEADGLAVGSPSKLVAEIANILIDGIYTIEDEELFKLLALLKDSENIKVEPSAAASLKGPLLVNSRANAIHISWATGGIFIPEEIYREMYMRGKSYLKDVY.

Position 105 is an N6-(pyridoxal phosphate)lysine (lysine 105).

It belongs to the serine/threonine dehydratase family. DsdA subfamily. It depends on pyridoxal 5'-phosphate as a cofactor.

It carries out the reaction D-serine = pyruvate + NH4(+). In Carboxydothermus hydrogenoformans (strain ATCC BAA-161 / DSM 6008 / Z-2901), this protein is Probable D-serine dehydratase.